Consider the following 518-residue polypeptide: Arrestin-related trafficking adapter 10 (518 aa).

A Glycyl lysine isopeptide (Lys-Gly) (interchain with G-Cter in ubiquitin) cross-link involves residue Lys118.

Belongs to the ART10 family. In terms of assembly, interacts with RSP5. Post-translationally, ubiquitinated by RSP5.

The protein localises to the cytoplasm. Functionally, may regulate endocytosis by recruiting RSP5 ubiquitin ligase activity to specific plasma membrane proteins in response to extracellular stimuli. This chain is Arrestin-related trafficking adapter 10 (ART10), found in Saccharomyces cerevisiae (strain RM11-1a) (Baker's yeast).